The chain runs to 2122 residues: Pecanex-like protein 2 (2122 aa).

2 helical membrane-spanning segments follow: residues 36–53 and 60–82; these read LYLW…HLAF and ALFY…YRLH. 2 disordered regions span residues 92 to 164 and 180 to 250; these read QHRS…ELPA and QPEA…LVNP. 2 stretches are compositionally biased toward polar residues: residues 146–157 and 185–203; these read SRGQSVHSQHSS and ASST…SQGR. An N-linked (GlcNAc...) asparagine glycan is attached at Asn-288. Composition is skewed to low complexity over residues 392–407 and 458–476; these read VTSS…AESA and PDRC…PGST. 2 disordered regions span residues 392-556 and 575-634; these read VTSS…QIPN and VVAP…PVFT. Positions 528 to 538 are enriched in basic and acidic residues; it reads STKEVVSDGEK. The N-linked (GlcNAc...) asparagine glycan is linked to Asn-556. A compositionally biased stretch (basic and acidic residues) spans 599–618; the sequence is TKEEAVENEKPNGRDPKPGK. The span at 625 to 634 shows a compositional bias: polar residues; that stretch reads DPANGSPVFT. The next 13 helical transmembrane spans lie at 825 to 845, 849 to 869, 882 to 902, 933 to 953, 976 to 998, 1010 to 1030, 1080 to 1100, 1105 to 1125, 1174 to 1194, 1218 to 1238, 1245 to 1265, 1270 to 1290, and 1305 to 1325; these read VAVL…NRGF, LWVL…LKSV, QIIA…ILLL, HLIV…FPQI, GITS…HAFC, HIPA…YHLS, LVIC…TVFL, FLSI…HHLL, YLLY…SISN, SFCN…FFHF, ESFL…GDLL, FVLA…HVFA, and TFAT…VIFI. 3 N-linked (GlcNAc...) asparagine glycosylation sites follow: Asn-1393, Asn-1534, and Asn-1802. 2 disordered regions span residues 1858 to 1943 and 1955 to 1991; these read SVGQ…SSGP and STSV…TTGH. The segment covering 1888 to 1898 has biased composition (basic and acidic residues); the sequence is ESRDGSTEQPR. Polar residues predominate over residues 1922–1942; that stretch reads SQSVQAHSAISQRPPTLSSSG. Over residues 1968-1981 the composition is skewed to low complexity; sequence SRLSLHTSAASLHS. Asn-2039 is a glycosylation site (N-linked (GlcNAc...) asparagine). The tract at residues 2097 to 2122 is disordered; sequence VLCRRASQEDMGLDDTASQQSTSDEQ. Residues 2112–2122 show a composition bias toward polar residues; that stretch reads TASQQSTSDEQ.

Belongs to the pecanex family.

The protein resides in the membrane. May play a role in tumorigenesis. In Mus musculus (Mouse), this protein is Pecanex-like protein 2.